The sequence spans 247 residues: RNA polymerase sigma factor FliA (247 aa).

The tract at residues 22 to 94 (LIQRYAPLVK…MLDEVRKGDW (73 aa)) is sigma-70 factor domain-2. An Interaction with polymerase core subunit RpoC motif is present at residues 49-52 (DLMQ). Residues 102-171 (NTRMVTDAIR…GLPEDTSLSH (70 aa)) are sigma-70 factor domain-3. The segment at 190 to 238 (AIAKLPERERLVLALYYDEELNLKEIGEVLGVSESRVSQLHSQCAARLR) is sigma-70 factor domain-4. The segment at residues 212–231 (LKEIGEVLGVSESRVSQLHS) is a DNA-binding region (H-T-H motif).

The protein belongs to the sigma-70 factor family. FliA subfamily.

It is found in the cytoplasm. Its function is as follows. Sigma factors are initiation factors that promote the attachment of RNA polymerase to specific initiation sites and are then released. This sigma factor controls the expression of flagella-related genes. Required for the flagellin gene (fliC) expression. The chain is RNA polymerase sigma factor FliA from Pseudomonas aeruginosa (strain ATCC 15692 / DSM 22644 / CIP 104116 / JCM 14847 / LMG 12228 / 1C / PRS 101 / PAO1).